Reading from the N-terminus, the 83-residue chain is uncharacterized protein (83 aa).

This is an uncharacterized protein from Escherichia coli (strain K12).